A 221-amino-acid polypeptide reads, in one-letter code: uncharacterized protein (221 aa).

Residues 1-189 (MDSGKDTNGY…NVVYCSEKAV (189 aa)) enclose the Peptidase S8 domain.

It belongs to the peptidase S8 family.

This is an uncharacterized protein from Aquifex aeolicus (strain VF5).